Consider the following 90-residue polypeptide: MNIKPLADRVLILPAPAEEKTIGGIIIPDTAKEKPLQGEVVAIGNGTKDEEMVLHVGDQVLYGKYSGTELEHDGKKYLIMRQSDVLAVLG.

This sequence belongs to the GroES chaperonin family. In terms of assembly, heptamer of 7 subunits arranged in a ring. Interacts with the chaperonin GroEL.

The protein localises to the cytoplasm. Together with the chaperonin GroEL, plays an essential role in assisting protein folding. The GroEL-GroES system forms a nano-cage that allows encapsulation of the non-native substrate proteins and provides a physical environment optimized to promote and accelerate protein folding. GroES binds to the apical surface of the GroEL ring, thereby capping the opening of the GroEL channel. This Phocaeicola vulgatus (strain ATCC 8482 / DSM 1447 / JCM 5826 / CCUG 4940 / NBRC 14291 / NCTC 11154) (Bacteroides vulgatus) protein is Co-chaperonin GroES.